A 260-amino-acid polypeptide reads, in one-letter code: Putative ABC transporter ATP-binding protein PH0132 (260 aa).

One can recognise an ABC transporter domain in the interval 2 to 234 (IEFRDVWFWY…DLEGFGLKEP (233 aa)). 34–41 (GPNGSGKT) is a binding site for ATP.

The protein belongs to the ABC transporter superfamily.

It is found in the cell membrane. In terms of biological role, probably part of an ABC transporter complex. Responsible for energy coupling to the transport system. This is Putative ABC transporter ATP-binding protein PH0132 from Pyrococcus horikoshii (strain ATCC 700860 / DSM 12428 / JCM 9974 / NBRC 100139 / OT-3).